Reading from the N-terminus, the 332-residue chain is GTP 3',8-cyclase (332 aa).

Residues 9-220 form the Radical SAM core domain; sequence RFARKVDYLR…DQVRERIAER (212 aa). Arg-18 contributes to the GTP binding site. Residues Cys-25 and Cys-29 each coordinate [4Fe-4S] cluster. Residue Tyr-31 participates in S-adenosyl-L-methionine binding. Residue Cys-32 coordinates [4Fe-4S] cluster. Residue Arg-67 coordinates GTP. Gly-71 lines the S-adenosyl-L-methionine pocket. Thr-98 provides a ligand contact to GTP. Ser-122 serves as a coordination point for S-adenosyl-L-methionine. Lys-159 is a GTP binding site. Met-193 serves as a coordination point for S-adenosyl-L-methionine. Residues Cys-258 and Cys-261 each contribute to the [4Fe-4S] cluster site. 263 to 265 is a GTP binding site; it reads RVR. Cys-275 is a binding site for [4Fe-4S] cluster.

The protein belongs to the radical SAM superfamily. MoaA family. Monomer and homodimer. [4Fe-4S] cluster serves as cofactor.

It carries out the reaction GTP + AH2 + S-adenosyl-L-methionine = (8S)-3',8-cyclo-7,8-dihydroguanosine 5'-triphosphate + 5'-deoxyadenosine + L-methionine + A + H(+). It participates in cofactor biosynthesis; molybdopterin biosynthesis. Functionally, catalyzes the cyclization of GTP to (8S)-3',8-cyclo-7,8-dihydroguanosine 5'-triphosphate. This Pseudomonas syringae pv. syringae (strain B728a) protein is GTP 3',8-cyclase.